Here is a 64-residue protein sequence, read N- to C-terminus: Endodeoxyribonuclease toxin RalR (64 aa).

Ca(2+) is required as a cofactor. It depends on Mg(2+) as a cofactor.

Inhibited by EDTA. Its function is as follows. Toxic component of a type I toxin-antitoxin (TA) system. Upon overexpression inhibits growth and reduces colony-forming units in both the presence and absence of the Rac prophage, cells become filamentous. Has deoxyribonuclease activity (probably endonucleolytic), does not digest RNA. Its toxic effects are neutralized by sRNA antitoxin RalA, which is encoded in trans on the opposite DNA strand. Has RAL-like activity. This Escherichia coli (strain K12) protein is Endodeoxyribonuclease toxin RalR (ralR).